A 206-amino-acid polypeptide reads, in one-letter code: Urease accessory protein UreG (206 aa).

GTP is bound at residue 13 to 20 (GPVGSGKT).

It belongs to the SIMIBI class G3E GTPase family. UreG subfamily. As to quaternary structure, homodimer. UreD, UreF and UreG form a complex that acts as a GTP-hydrolysis-dependent molecular chaperone, activating the urease apoprotein by helping to assemble the nickel containing metallocenter of UreC. The UreE protein probably delivers the nickel.

The protein localises to the cytoplasm. Facilitates the functional incorporation of the urease nickel metallocenter. This process requires GTP hydrolysis, probably effectuated by UreG. The sequence is that of Urease accessory protein UreG from Haloquadratum walsbyi (strain DSM 16790 / HBSQ001).